Consider the following 294-residue polypeptide: MFRGVGTAIVTPFKNGELDLESYERLVRYQLENGVNALIVLGTTGESPTVNEDEREKLVSRTLEIVDGKIPVIVGAGTNSTEKTLKLVKQAEKLGANGVLVVTPYYNKPTQEGLYQHYKYISERTDLGIVVYNVPGRTGVNVLPETAARIAADLKNVVGIKEANPDIDQIDRTVSLTKQARSDFMVWSGNDDRTFYLLCAGGDGVISVVSNVAPKQMVELCAEYFSGNLEKSREVHRKLRPLMKALFVETNPIPVKAALNLMGFIENELRLPLVPASEKTVELLRNVLKESGLL.

Thr-44 is a pyruvate binding site. Residue Tyr-132 is the Proton donor/acceptor of the active site. Lys-161 serves as the catalytic Schiff-base intermediate with substrate. A pyruvate-binding site is contributed by Ile-206.

Belongs to the DapA family. Homotetramer; dimer of dimers.

The protein resides in the cytoplasm. The enzyme catalyses L-aspartate 4-semialdehyde + pyruvate = (2S,4S)-4-hydroxy-2,3,4,5-tetrahydrodipicolinate + H2O + H(+). Its pathway is amino-acid biosynthesis; L-lysine biosynthesis via DAP pathway; (S)-tetrahydrodipicolinate from L-aspartate: step 3/4. With respect to regulation, is not inhibited by (S)-lysine, in contrast to E.coli DapA. In terms of biological role, catalyzes the condensation of (S)-aspartate-beta-semialdehyde [(S)-ASA] and pyruvate to 4-hydroxy-tetrahydrodipicolinate (HTPA). This is 4-hydroxy-tetrahydrodipicolinate synthase from Thermotoga maritima (strain ATCC 43589 / DSM 3109 / JCM 10099 / NBRC 100826 / MSB8).